A 616-amino-acid polypeptide reads, in one-letter code: Chaperone protein HscA (616 aa).

Belongs to the heat shock protein 70 family.

Chaperone involved in the maturation of iron-sulfur cluster-containing proteins. Has a low intrinsic ATPase activity which is markedly stimulated by HscB. Involved in the maturation of IscU. The polypeptide is Chaperone protein HscA (Serratia proteamaculans (strain 568)).